The primary structure comprises 510 residues: MKSIILTILDGWGYSENKKGNAIQIADTPTIDKLWNSYPNTLLNASGRDVGLPEGQMGNSEVGHTTIGAGRIINQDLVRISKSIEDRSFFNNEAINSICQKINFYNTKLHLIGLCSNGGVHSHIKHLFALLDIAMRYKIQICIHAITDGRDTSPYGSKIFIEEINNQIQQFNHINICTISGRYYSMDRDCRWARTEKSYNTLLKNTLGFTKDPILMINEYYKKNISDEFIPPTRLHKGSIENNDGIIFFNFRPDRMRQLVHAFTKSTFKGFNTTSFHNLEILTLTQYDPSLDIEVAFPAKKNKNFIGEIIAKYGLKQLRLAETEKYAHVTYFFNGGIEEPFAGEDRQLIPSPKVETYDLDPEMSATKLTESAINAINKNTYKFIVINYANPDMVGHTGNLDATIHAIQKIDKCIKKIWLACQAMNSTLIITSDHGNADYMLDENNEPCTSHSTNPVPFILAEPTNIHTYHLRKNGNLADIAPTILQLLNLNIPNEMNGISLLETKAKNKI.

Residues D10 and S60 each contribute to the Mn(2+) site. Residue S60 is the Phosphoserine intermediate of the active site. Residues H121, 150–151 (RD), R182, R188, 252–255 (RPDR), and K325 each bind substrate. Mn(2+) is bound by residues D392, H396, D433, H434, and H451.

This sequence belongs to the BPG-independent phosphoglycerate mutase family. Mn(2+) serves as cofactor.

Its subcellular location is the plastid. It localises to the chloroplast. The catalysed reaction is (2R)-2-phosphoglycerate = (2R)-3-phosphoglycerate. It participates in carbohydrate degradation; glycolysis; pyruvate from D-glyceraldehyde 3-phosphate: step 3/5. Catalyzes the interconversion of 2-phosphoglycerate and 3-phosphoglycerate. The protein is 2,3-bisphosphoglycerate-independent phosphoglycerate mutase of Gracilaria tenuistipitata var. liui (Red alga).